The following is a 205-amino-acid chain: Holliday junction branch migration complex subunit RuvA (205 aa).

Positions 1 to 64 (MIGKLRGIVD…DEAIRLIGFT (64 aa)) are domain I. Residues 65–143 (TDSEREWFRL…DSMGLSAALE (79 aa)) are domain II. The flexible linker stretch occupies residues 144–152 (VGVNGEAVS). The tract at residues 153–205 (SVSAPARDAVSALVNLGYPQAQAMGAVAAAAKRLDDAASTEQLIRHGLKELAR) is domain III.

It belongs to the RuvA family. Homotetramer. Forms an RuvA(8)-RuvB(12)-Holliday junction (HJ) complex. HJ DNA is sandwiched between 2 RuvA tetramers; dsDNA enters through RuvA and exits via RuvB. An RuvB hexamer assembles on each DNA strand where it exits the tetramer. Each RuvB hexamer is contacted by two RuvA subunits (via domain III) on 2 adjacent RuvB subunits; this complex drives branch migration. In the full resolvosome a probable DNA-RuvA(4)-RuvB(12)-RuvC(2) complex forms which resolves the HJ.

Its subcellular location is the cytoplasm. Its function is as follows. The RuvA-RuvB-RuvC complex processes Holliday junction (HJ) DNA during genetic recombination and DNA repair, while the RuvA-RuvB complex plays an important role in the rescue of blocked DNA replication forks via replication fork reversal (RFR). RuvA specifically binds to HJ cruciform DNA, conferring on it an open structure. The RuvB hexamer acts as an ATP-dependent pump, pulling dsDNA into and through the RuvAB complex. HJ branch migration allows RuvC to scan DNA until it finds its consensus sequence, where it cleaves and resolves the cruciform DNA. The chain is Holliday junction branch migration complex subunit RuvA from Parvibaculum lavamentivorans (strain DS-1 / DSM 13023 / NCIMB 13966).